A 75-amino-acid chain; its full sequence is Small ribosomal subunit protein bS16 (75 aa).

It belongs to the bacterial ribosomal protein bS16 family.

The sequence is that of Small ribosomal subunit protein bS16 from Helicobacter pylori (strain G27).